A 328-amino-acid polypeptide reads, in one-letter code: MLSQVRVAVTQAEPVWLDLEATVKKTCDLIAEAAANGAQLVTFPECWIPGYPAWIWARPVDMRLSSIYIQNSLKIDSPQMASIQQCAAENKIVVVLGFSENLHNSLYISQAIIASDGKILTTRKKIKPTHMERTIFGDSFGDCLQSVVDTSAGRVGALSCWEHIQPLLKYHTYAQREQIHVAAWPPLFPHSEDGSLFSMSTEGTSSIARTYAIESQSFVLHTTTVIGQSGIDRMATSTGALMSTPGGGCSAIFGPDGRQLSQPIPSAEEGIIYADLDFEHIYHSKAFVDVCGHYSRPDLLWLGVEGGVKRHVRDNATTATPQVEQQEE.

The region spanning 5–278 (VRVAVTQAEP…EGIIYADLDF (274 aa)) is the CN hydrolase domain. The active-site Proton acceptor is Glu-45. Lys-125 is a catalytic residue. Cys-160 serves as the catalytic Nucleophile.

The protein belongs to the carbon-nitrogen hydrolase superfamily. Nitrilase family.

It catalyses the reaction a nitrile + 2 H2O = a carboxylate + NH4(+). The catalysed reaction is 4-chlorophenylacetonitrile + 2 H2O = 4-chlorophenylacetate + NH4(+). Nitrilase that hydrolyzes preferentially phenylacetonitrile, (R,S)-mandelonitrile, and 3-indolylacetonitrile. The polypeptide is Arylacetonitrilase (Aspergillus niger (strain ATCC MYA-4892 / CBS 513.88 / FGSC A1513)).